The chain runs to 229 residues: Urease accessory protein UreF (229 aa).

Belongs to the UreF family. In terms of assembly, ureD, UreF and UreG form a complex that acts as a GTP-hydrolysis-dependent molecular chaperone, activating the urease apoprotein by helping to assemble the nickel containing metallocenter of UreC. The UreE protein probably delivers the nickel.

The protein resides in the cytoplasm. Its function is as follows. Required for maturation of urease via the functional incorporation of the urease nickel metallocenter. The sequence is that of Urease accessory protein UreF from Trichormus variabilis (strain ATCC 29413 / PCC 7937) (Anabaena variabilis).